Reading from the N-terminus, the 1067-residue chain is Lon protease homolog, mitochondrial (1067 aa).

The N-terminal 36 residues, 1-36, are a transit peptide targeting the mitochondrion; sequence MITRLSGACLRRSGAKRNWPREHLVHRSLLASFSTT. Over residues 55–82 the composition is skewed to basic and acidic residues; the sequence is KSKEPKDNKPLDNKNDPKKTHNEDESHT. Disordered stretches follow at residues 55–142 and 262–314; these read KSKE…MPLN and IPPK…ESTP. Acidic residues predominate over residues 128-139; that stretch reads FELGGEENEDEM. In terms of domain architecture, Lon N-terminal spans 162 to 425; that stretch reads LLALPIARRP…KALYVLKKEL (264 aa). Over residues 293–311 the composition is skewed to basic and acidic residues; the sequence is VKSDLKQDNGKEEPEKEVE. 578–585 is an ATP binding site; it reads GPPGVGKT. A disordered region spans residues 791 to 820; sequence NSKEKSTGKSGKKTSPQSSEDAANKEASSV. The region spanning 854–1040 is the Lon proteolytic domain; it reads TTPPGVVMGL…DDVFKRVFSN (187 aa). Residues S946 and K989 contribute to the active site.

Belongs to the peptidase S16 family. As to quaternary structure, homohexamer or homoheptamer. Organized in a ring with a central cavity.

It localises to the mitochondrion matrix. It carries out the reaction Hydrolysis of proteins in presence of ATP.. Functionally, ATP-dependent serine protease that mediates the selective degradation of misfolded, unassembled or oxidatively damaged polypeptides as well as certain short-lived regulatory proteins in the mitochondrial matrix. May also have a chaperone function in the assembly of inner membrane protein complexes. Participates in the regulation of mitochondrial gene expression and in the maintenance of the integrity of the mitochondrial genome. Binds to mitochondrial DNA in a site-specific manner. In Schizosaccharomyces pombe (strain 972 / ATCC 24843) (Fission yeast), this protein is Lon protease homolog, mitochondrial (pim1).